Reading from the N-terminus, the 483-residue chain is Regulatory protein ViaA (483 aa).

This sequence belongs to the ViaA family. Homodimer. Interacts with RavA.

The protein localises to the cytoplasm. Component of the RavA-ViaA chaperone complex, which may act on the membrane to optimize the function of some of the respiratory chains. ViaA stimulates the ATPase activity of RavA. The chain is Regulatory protein ViaA from Salmonella paratyphi A (strain ATCC 9150 / SARB42).